Here is a 1049-residue protein sequence, read N- to C-terminus: MPNFFIDRPIFAWVIAIIIMLAGGLAILKLPVAQYPTIAPPAVTISASYPGADAKTVQDTVTQVIEQNMNGIDNLMYMSSNSDSTGTVQITLTFESGTDADIAQVQVQNKLQLAMPLLPQEVQQQGVSVEKSSSSFLMVVGVINTDGTMTQEDISDYVAANMKDAISRTSGVGDVQLFGSQYAMRIWMNPNELNKFQLTPVDVITAIKAQNAQVAAGQLGGTPPVKGQQLNASIIAQTRLTSTEEFGKILLKVNQDGSRVLLRDVAKIELGGENYDIIAEFNGQPASGLGIKLATGANALDTAAAIRAELAKMEPFFPSGLKIVYPYDTTPFVKISIHEVVKTLVEAIILVFLVMYLFLQNFRATLIPTIAVPVVLLGTFAVLAAFGFSINTLTMFGMVLAIGLLVDDAIVVVENVERVMAEEGLPPKEATRKSMGQIQGALVGIAMVLSAVFVPMAFFGGSTGAIYRQFSITIVSAMALSVLVALILTPALCATMLKPIAKGDHGEGKKGFFGWFNRMFEKSTHHYTDSVGGILRSTGRYLVLYLIIVVGMAYLFVRLPSSFLPDEDQGVFMTMVQLPAGATQERTQKVLNEVTHYYLTKEKNNVESVFAVNGFGFAGRGQNTGIAFVSLKDWADRPGEENKVEAITMRATRAFSQIKDAMVFAFNLPAIVELGTATGFDFELIDQAGLGHEKLTQARNQLLAEAAKHPDMLTSVRPNGLEDTPQFKIDIDQEKAQALGVSINDINTTLGAAWGGSYVNDFIDRGRVKKVYVMSEAKYRMLPDDIGDWYVRAADGQMVPFSAFSSSRWEYGSPRLERYNGLPSMEILGQAAPGKSTGEAMELMEQLASKLPTGVGYDWTGMSYQERLSGNQAPSLYAISLIVVFLCLAALYESWSIPFSVMLVVPLGVIGALLAATFRGLTNDVYFQVGLLTTIGLSAKNAILIVEFAKDLMDKEGKGLIEATLDAVRMRLRPILMTSLAFILGVMPLVISTGAGSGAQNAVGTGVMGGMVTATVLAIFFVPVFFVVVRRRFSRKNEDIEHSHTVDHH.

The Cytoplasmic segment spans residues 1 to 9 (MPNFFIDRP). A helical transmembrane segment spans residues 10-28 (IFAWVIAIIIMLAGGLAIL). The Periplasmic segment spans residues 29–336 (KLPVAQYPTI…YDTTPFVKIS (308 aa)). Residues 337-356 (IHEVVKTLVEAIILVFLVMY) form a helical membrane-spanning segment. Topologically, residues 357–365 (LFLQNFRAT) are cytoplasmic. The chain crosses the membrane as a helical span at residues 366 to 385 (LIPTIAVPVVLLGTFAVLAA). The Periplasmic segment spans residues 386–391 (FGFSIN). The chain crosses the membrane as a helical span at residues 392 to 413 (TLTMFGMVLAIGLLVDDAIVVV). The Cytoplasmic segment spans residues 414–438 (ENVERVMAEEGLPPKEATRKSMGQI). Residues 439-457 (QGALVGIAMVLSAVFVPMA) traverse the membrane as a helical segment. Residues 458–465 (FFGGSTGA) lie on the Periplasmic side of the membrane. A helical membrane pass occupies residues 466–490 (IYRQFSITIVSAMALSVLVALILTP). Over 491-538 (ALCATMLKPIAKGDHGEGKKGFFGWFNRMFEKSTHHYTDSVGGILRST) the chain is Cytoplasmic. The chain crosses the membrane as a helical span at residues 539-555 (GRYLVLYLIIVVGMAYL). Residues 556-871 (FVRLPSSFLP…MSYQERLSGN (316 aa)) are Periplasmic-facing. Residues 872–888 (QAPSLYAISLIVVFLCL) form a helical membrane-spanning segment. Residues 889–898 (AALYESWSIP) are Cytoplasmic-facing. A helical membrane pass occupies residues 899–918 (FSVMLVVPLGVIGALLAATF). Topologically, residues 919 to 924 (RGLTND) are periplasmic. A helical transmembrane segment spans residues 925 to 943 (VYFQVGLLTTIGLSAKNAI). Over 944-972 (LIVEFAKDLMDKEGKGLIEATLDAVRMRL) the chain is Cytoplasmic. The helical transmembrane segment at 973 to 992 (RPILMTSLAFILGVMPLVIS) threads the bilayer. At 993–998 (TGAGSG) the chain is on the periplasmic side. Residues 999–1018 (AQNAVGTGVMGGMVTATVLA) traverse the membrane as a helical segment. Over 1019–1049 (IFFVPVFFVVVRRRFSRKNEDIEHSHTVDHH) the chain is Cytoplasmic.

The protein belongs to the resistance-nodulation-cell division (RND) (TC 2.A.6) family. As to quaternary structure, homotrimer, with large domains that extend into the periplasm, interacts with AcrA and TolC. AcrA may be required to stably link this protein and TolC. Interacts with AcrZ. Part of the AcrA-AcrB-AcrZ-TolC efflux pump.

It is found in the cell inner membrane. In terms of biological role, acrA-AcrB-AcrZ-TolC is a drug efflux protein complex with broad substrate specificity that uses the proton motive force to export substrates. Its function is as follows. (Microbial infection) Involved in contact-dependent growth inhibition (CDI), acts downstream of BamA, the receptor for CDI. Its role in CDI is independent of the AcrA-AcrB-TolC efflux pump complex. This Escherichia coli (strain K12) protein is Multidrug efflux pump subunit AcrB (acrB).